The chain runs to 463 residues: MTTVQLQKTNQPSIKASRGSYWITTFGCQMNKADSERMSGILEYMGYYPAEEELKADLVLYNTCTIRDSAEQKVYSYLGRQAIRKRSLPNLKIVVAGCLAQQEGESLLRRVPEIDLLMGPQHCNRLESLLNQVDSGQQVLATEEQFILEDITTPRRDSSICGWVNIIYGCNERCTYCVVPSVRGKEQSRTPEAIKSEVEDLAKSGYKEITLLGQNIDAYGRDFQSQNKEDSAQVTLSYLLKYIHDIEGIERIRFATSHPRYFTKELIDTCSELPKVCEHFHIPFQSGSNKILKNMGRGYTIESYKNIINYIKAKIPKAAISGDAIVAFPGESETDYEQTLSLIDEIKFDHVNTAAYSPRPNTPAATWPRQLNEDIKVKRLREINSLVENIAKERNQRYKNTSQEILIENINPKDSFQLMGRTRTNRLTFFPRSLKNGVENKLGELIKVKITDVRPFSLTAKLL.

The 117-residue stretch at 19 to 135 folds into the MTTase N-terminal domain; it reads GSYWITTFGC…LESLLNQVDS (117 aa). [4Fe-4S] cluster contacts are provided by Cys-28, Cys-64, Cys-98, Cys-170, Cys-174, and Cys-177. One can recognise a Radical SAM core domain in the interval 156 to 393; sequence RDSSICGWVN…NSLVENIAKE (238 aa). A TRAM domain is found at 396–463; that stretch reads QRYKNTSQEI…RPFSLTAKLL (68 aa).

Belongs to the methylthiotransferase family. MiaB subfamily. As to quaternary structure, monomer. Requires [4Fe-4S] cluster as cofactor.

It localises to the cytoplasm. It carries out the reaction N(6)-dimethylallyladenosine(37) in tRNA + (sulfur carrier)-SH + AH2 + 2 S-adenosyl-L-methionine = 2-methylsulfanyl-N(6)-dimethylallyladenosine(37) in tRNA + (sulfur carrier)-H + 5'-deoxyadenosine + L-methionine + A + S-adenosyl-L-homocysteine + 2 H(+). Functionally, catalyzes the methylthiolation of N6-(dimethylallyl)adenosine (i(6)A), leading to the formation of 2-methylthio-N6-(dimethylallyl)adenosine (ms(2)i(6)A) at position 37 in tRNAs that read codons beginning with uridine. The chain is tRNA-2-methylthio-N(6)-dimethylallyladenosine synthase from Prochlorococcus marinus (strain NATL2A).